The primary structure comprises 269 residues: 1,6-dihydroxycyclohexa-2,4-diene-1-carboxylate dehydrogenase (269 aa).

11–35 contributes to the NAD(+) binding site; sequence VITGAAQGIGRRVAERMAAEGGRLL. S142 is a binding site for substrate. The active-site Proton acceptor is Y153.

It belongs to the short-chain dehydrogenases/reductases (SDR) family. Homodimer.

The catalysed reaction is (1R,6S)-1,6-dihydroxycyclohexa-2,4-diene-1-carboxylate + NAD(+) = catechol + CO2 + NADH. It functions in the pathway aromatic compound metabolism; benzoate degradation via hydroxylation; catechol from benzoate: step 2/2. Its function is as follows. Degradation of 2-hydro-1,2-dihydroxy benzoate (DHB) to catechol. The protein is 1,6-dihydroxycyclohexa-2,4-diene-1-carboxylate dehydrogenase (xylL) of Pseudomonas putida (Arthrobacter siderocapsulatus).